Reading from the N-terminus, the 371-residue chain is tRNA-specific 2-thiouridylase MnmA (371 aa).

ATP-binding positions include 12 to 19 (GMSGGVDS) and Met-38. Positions 98–100 (NPD) are interaction with target base in tRNA. Cys-103 serves as the catalytic Nucleophile. A disulfide bond links Cys-103 and Cys-200. Gly-128 provides a ligand contact to ATP. Residues 150–152 (KDQ) form an interaction with tRNA region. Cys-200 (cysteine persulfide intermediate) is an active-site residue. The segment at 312–313 (RY) is interaction with tRNA.

It belongs to the MnmA/TRMU family. As to quaternary structure, interacts with TusE.

It is found in the cytoplasm. It carries out the reaction S-sulfanyl-L-cysteinyl-[protein] + uridine(34) in tRNA + AH2 + ATP = 2-thiouridine(34) in tRNA + L-cysteinyl-[protein] + A + AMP + diphosphate + H(+). Catalyzes the 2-thiolation of uridine at the wobble position (U34) of tRNA(Lys), tRNA(Glu) and tRNA(Gln), leading to the formation of s(2)U34, the first step of tRNA-mnm(5)s(2)U34 synthesis. Sulfur is provided by IscS, via a sulfur-relay system. Binds ATP and its substrate tRNAs. The sequence is that of tRNA-specific 2-thiouridylase MnmA from Yersinia pseudotuberculosis serotype O:1b (strain IP 31758).